The primary structure comprises 148 residues: Probable glucosamine 6-phosphate N-acetyltransferase (148 aa).

An N-acetyltransferase domain is found at 3–148 (ISINELNFDD…KQMALYLNGK (146 aa)). Residues T25, 72–75 (KFIH), and 84–86 (EDV) each bind substrate. Residues 86 to 88 (VVV) and 94 to 99 (LHGIGK) contribute to the acetyl-CoA site. Residues 115–116 (YK) and D120 contribute to the substrate site. 129 to 131 (YCK) contacts acetyl-CoA. E138 is a binding site for substrate.

This sequence belongs to the acetyltransferase family. GNA1 subfamily.

It carries out the reaction D-glucosamine 6-phosphate + acetyl-CoA = N-acetyl-D-glucosamine 6-phosphate + CoA + H(+). It functions in the pathway nucleotide-sugar biosynthesis; UDP-N-acetyl-alpha-D-glucosamine biosynthesis; N-acetyl-alpha-D-glucosamine 1-phosphate from alpha-D-glucosamine 6-phosphate (route I): step 1/2. The chain is Probable glucosamine 6-phosphate N-acetyltransferase from Acanthamoeba polyphaga (Amoeba).